The sequence spans 267 residues: L-aspartate dehydrogenase 2 (267 aa).

NAD(+)-binding residues include Ala-123 and Asn-189. Residue His-219 is part of the active site.

This sequence belongs to the L-aspartate dehydrogenase family.

It carries out the reaction L-aspartate + NADP(+) + H2O = oxaloacetate + NH4(+) + NADPH + H(+). It catalyses the reaction L-aspartate + NAD(+) + H2O = oxaloacetate + NH4(+) + NADH + H(+). It functions in the pathway cofactor biosynthesis; NAD(+) biosynthesis; iminoaspartate from L-aspartate (dehydrogenase route): step 1/1. In terms of biological role, specifically catalyzes the NAD or NADP-dependent dehydrogenation of L-aspartate to iminoaspartate. This is L-aspartate dehydrogenase 2 from Bordetella bronchiseptica (strain ATCC BAA-588 / NCTC 13252 / RB50) (Alcaligenes bronchisepticus).